Here is a 334-residue protein sequence, read N- to C-terminus: Atypical chemokine receptor 1 (334 aa).

Residues Met-1 to Pro-61 lie on the Extracellular side of the membrane. N-linked (GlcNAc...) asparagine glycosylation is found at Asn-16, Asn-26, and Asn-32. 2 disulfides stabilise this stretch: Cys-49/Cys-274 and Cys-127/Cys-193. A helical transmembrane segment spans residues Phe-62–Leu-82. The Cytoplasmic portion of the chain corresponds to Arg-83–Ser-93. Residues Trp-94–Leu-114 form a helical membrane-spanning segment. Residues Ala-115–Cys-127 are Extracellular-facing. Residues Asn-128–Leu-151 form a helical membrane-spanning segment. The Cytoplasmic portion of the chain corresponds to Asn-152–Thr-164. The helical transmembrane segment at Leu-165–Ala-185 threads the bilayer. The Extracellular portion of the chain corresponds to Ser-186–Lys-205. The chain crosses the membrane as a helical span at residues Tyr-206–Ala-226. Topologically, residues Lys-227–Ser-242 are cytoplasmic. Residues Val-243–Leu-263 traverse the membrane as a helical segment. Over Val-264–Asn-285 the chain is Extracellular. N-linked (GlcNAc...) asparagine glycosylation is present at Asn-285. Residues Val-286–Cys-306 form a helical membrane-spanning segment. At His-307 to Ser-334 the chain is on the cytoplasmic side.

It belongs to the G-protein coupled receptor 1 family. Atypical chemokine receptor subfamily. In terms of tissue distribution, expressed in liver and brain.

Its subcellular location is the early endosome. It localises to the recycling endosome. The protein localises to the membrane. Atypical chemokine receptor that controls chemokine levels and localization via high-affinity chemokine binding that is uncoupled from classic ligand-driven signal transduction cascades, resulting instead in chemokine sequestration, degradation, or transcytosis. Also known as interceptor (internalizing receptor) or chemokine-scavenging receptor or chemokine decoy receptor. Has a promiscuous chemokine-binding profile, interacting with inflammatory chemokines of both the CXC and the CC subfamilies but not with homeostatic chemokines. Acts as a receptor for chemokines including CCL2, CCL5, CCL7, CCL11, CCL13, CCL14, CCL17, CXCL5, CXCL6, IL8/CXCL8, CXCL11, GRO, RANTES, MCP-1 and TARC. May regulate chemokine bioavailability and, consequently, leukocyte recruitment through two distinct mechanisms: when expressed in endothelial cells, it sustains the abluminal to luminal transcytosis of tissue-derived chemokines and their subsequent presentation to circulating leukocytes; when expressed in erythrocytes, serves as blood reservoir of cognate chemokines but also as a chemokine sink, buffering potential surges in plasma chemokine levels. Functionally, (Microbial infection) Acts as a receptor for the malaria parasite Plasmodium yoelii in mature erythrocytes but not reticulocytes. This Mus musculus (Mouse) protein is Atypical chemokine receptor 1 (Ackr1).